An 82-amino-acid polypeptide reads, in one-letter code: Sec-independent protein translocase protein TatA (82 aa).

A helical transmembrane segment spans residues 1-21; the sequence is MGIFDWKHWIVILIVVVLVFG. Positions 43–82 are disordered; it reads VNTEEDDKKDQPAAQPAQPLNQPHTIDAQAQKVEEPARKD.

Belongs to the TatA/E family. In terms of assembly, the Tat system comprises two distinct complexes: a TatABC complex, containing multiple copies of TatA, TatB and TatC subunits, and a separate TatA complex, containing only TatA subunits. Substrates initially bind to the TatABC complex, which probably triggers association of the separate TatA complex to form the active translocon.

Its subcellular location is the cell inner membrane. Its function is as follows. Part of the twin-arginine translocation (Tat) system that transports large folded proteins containing a characteristic twin-arginine motif in their signal peptide across membranes. TatA could form the protein-conducting channel of the Tat system. This is Sec-independent protein translocase protein TatA from Pseudomonas aeruginosa (strain LESB58).